The chain runs to 299 residues: Homeobox protein ceh-24 (299 aa).

The segment covering 1–35 has biased composition (basic and acidic residues); sequence MSEKETPSPVLDVKKEKNEETGIDEEKSSEDDCSK. Disordered regions lie at residues 1–45 and 208–263; these read MSEK…NPSK and QEKE…SGVF. Residues 150–209 constitute a DNA-binding region (homeobox); the sequence is RRKRRVLFSQAQVYELERRFKQAKYLTAPEREQLANSIRLTPTQVKIWFQNHRYKCKRQE. Acidic residues predominate over residues 242-252; it reads DDKDDEEEEES.

It belongs to the NK-2 homeobox family. As to expression, expressed in the 8 vulval muscles, 8-10 ventral neurons in the head and in the most posterior pharyngeal muscle cell, m8. Expressed in SIA, SIB and SMB sublateral motor neurons, and in muscles of the pharynx and vulva.

It is found in the nucleus. Functionally, probable transcriptional regulator that is required in neural development for the normal formation of sublateral cholinergic motor neuron processes. Plays a role in regulating the expression of acetylcholine transporter protein unc-17 in the sublateral processes. In particular, it is required in sublateral motor neurons for a left-right turning behavior that occurs during the lethargus phase of the normal sleep process called 'flipping'. During 'flipping' animals rotate 180 degrees about their longitudinal axis. This chain is Homeobox protein ceh-24, found in Caenorhabditis elegans.